The following is a 391-amino-acid chain: MRSLFTRFFQLEAASGLLLIAAAVLALIINNSPLSYLYSGLLDVPVAVQIGALNIAKPLLLWINDGLMALFFLLIGLEVKREVVDGHLSKPSQVILPATAAVGGMVVPALIYWFINRDNPAAVAGWAIPTATDIAFALGVLALLGKRVPVSLKLFLMTLAIIDDLGAIIVIALFYSGTLSSVSLLLAAACLVVLIAMNRLGVVKLGPYMVIGLILWVCVLKSGVHATLAGVALALCIPLRTRNAETSPLLALEHALHPWVAYAILPLFAFANAGVSLAGMTVESFTHPVPMGIAVGLLLGKTVGVFGLTWLAVKLRLAALPAGAGWGQILGVAILCGIGFTMSLFVGSLAFSPGSSEYAGMDRMGILTGSFFAAVIGYAVTAMASRKPRVG.

12 consecutive transmembrane segments (helical) span residues 9-29 (FQLEAASGLLLIAAAVLALII), 36-56 (YLYSGLLDVPVAVQIGALNIA), 59-79 (LLLWINDGLMALFFLLIGLEV), 95-115 (ILPATAAVGGMVVPALIYWFI), 123-143 (VAGWAIPTATDIAFALGVLAL), 154-174 (LFLMTLAIIDDLGAIIVIALF), 177-197 (GTLSSVSLLLAAACLVVLIAM), 213-235 (LILWVCVLKSGVHATLAGVALAL), 259-279 (WVAYAILPLFAFANAGVSLAG), 293-313 (IAVGLLLGKTVGVFGLTWLAV), 329-349 (ILGVAILCGIGFTMSLFVGSL), and 364-384 (MGILTGSFFAAVIGYAVTAMA).

It belongs to the NhaA Na(+)/H(+) (TC 2.A.33) antiporter family.

The protein resides in the cell inner membrane. It carries out the reaction Na(+)(in) + 2 H(+)(out) = Na(+)(out) + 2 H(+)(in). Its function is as follows. Na(+)/H(+) antiporter that extrudes sodium in exchange for external protons. The sequence is that of Na(+)/H(+) antiporter NhaA from Pseudomonas putida (strain GB-1).